Reading from the N-terminus, the 689-residue chain is Glycine--tRNA ligase beta subunit (689 aa).

It belongs to the class-II aminoacyl-tRNA synthetase family. Tetramer of two alpha and two beta subunits.

The protein resides in the cytoplasm. The catalysed reaction is tRNA(Gly) + glycine + ATP = glycyl-tRNA(Gly) + AMP + diphosphate. This Acinetobacter baumannii (strain AB307-0294) protein is Glycine--tRNA ligase beta subunit.